Here is a 351-residue protein sequence, read N- to C-terminus: tRNA N6-adenosine threonylcarbamoyltransferase (351 aa).

Fe cation is bound by residues His124 and His128. Substrate contacts are provided by residues 146–150 (LVSGG), Asp180, Gly193, Asp197, and Asn285. Asp313 contributes to the Fe cation binding site.

This sequence belongs to the KAE1 / TsaD family. Requires Fe(2+) as cofactor.

It is found in the cytoplasm. It catalyses the reaction L-threonylcarbamoyladenylate + adenosine(37) in tRNA = N(6)-L-threonylcarbamoyladenosine(37) in tRNA + AMP + H(+). In terms of biological role, required for the formation of a threonylcarbamoyl group on adenosine at position 37 (t(6)A37) in tRNAs that read codons beginning with adenine. Is involved in the transfer of the threonylcarbamoyl moiety of threonylcarbamoyl-AMP (TC-AMP) to the N6 group of A37, together with TsaE and TsaB. TsaD likely plays a direct catalytic role in this reaction. The chain is tRNA N6-adenosine threonylcarbamoyltransferase from Mycobacterium leprae (strain TN).